The primary structure comprises 303 residues: Pantothenate synthetase (303 aa).

ATP is bound at residue 30–37; it reads MGYLHAGH. Catalysis depends on H37, which acts as the Proton donor. Residue Q61 participates in (R)-pantoate binding. Q61 serves as a coordination point for beta-alanine. Position 147–150 (147–150) interacts with ATP; sequence GAKD. Position 153 (Q153) interacts with (R)-pantoate. ATP contacts are provided by residues V176 and 184 to 187; that span reads LSSR.

This sequence belongs to the pantothenate synthetase family. As to quaternary structure, homodimer.

The protein resides in the cytoplasm. It catalyses the reaction (R)-pantoate + beta-alanine + ATP = (R)-pantothenate + AMP + diphosphate + H(+). It functions in the pathway cofactor biosynthesis; (R)-pantothenate biosynthesis; (R)-pantothenate from (R)-pantoate and beta-alanine: step 1/1. Catalyzes the condensation of pantoate with beta-alanine in an ATP-dependent reaction via a pantoyl-adenylate intermediate. In Rhizobium johnstonii (strain DSM 114642 / LMG 32736 / 3841) (Rhizobium leguminosarum bv. viciae), this protein is Pantothenate synthetase.